Here is a 335-residue protein sequence, read N- to C-terminus: Adenosine deaminase (335 aa).

The Zn(2+) site is built by His-12 and His-14. Residues His-14 and Asp-16 each coordinate substrate. His-197 lines the Zn(2+) pocket. Catalysis depends on Glu-200, which acts as the Proton donor. Residue Asp-278 participates in Zn(2+) binding.

Belongs to the metallo-dependent hydrolases superfamily. Adenosine and AMP deaminases family. Adenosine deaminase subfamily. Zn(2+) is required as a cofactor.

It catalyses the reaction adenosine + H2O + H(+) = inosine + NH4(+). It carries out the reaction 2'-deoxyadenosine + H2O + H(+) = 2'-deoxyinosine + NH4(+). Its function is as follows. Catalyzes the hydrolytic deamination of adenosine and 2-deoxyadenosine. The sequence is that of Adenosine deaminase from Clostridium botulinum (strain ATCC 19397 / Type A).